Reading from the N-terminus, the 233-residue chain is Lipoprotein-releasing system ATP-binding protein LolD (233 aa).

One can recognise an ABC transporter domain in the interval 6–233 (LQCDNLCKRY…TAELSLMGAE (228 aa)). 42–49 (GSSGSGKS) is an ATP binding site.

Belongs to the ABC transporter superfamily. Lipoprotein translocase (TC 3.A.1.125) family. The complex is composed of two ATP-binding proteins (LolD) and two transmembrane proteins (LolC and LolE).

It localises to the cell inner membrane. In terms of biological role, part of the ABC transporter complex LolCDE involved in the translocation of mature outer membrane-directed lipoproteins, from the inner membrane to the periplasmic chaperone, LolA. Responsible for the formation of the LolA-lipoprotein complex in an ATP-dependent manner. Such a release is dependent of the sorting-signal (absence of an Asp at position 2 of the mature lipoprotein) and of LolA. This Escherichia coli (strain K12) protein is Lipoprotein-releasing system ATP-binding protein LolD.